A 201-amino-acid polypeptide reads, in one-letter code: MARYTGPITRKSRRLRVDLVGGDQAFERRPYPPGQHGRARIKESEYLLQLQEKQKARFSYGVMEKQFRRYYEEANRQKGKTGDNLLRLLETRLDNVVYRAGLARTRRQARQLVSHGHFLVNGVKVDVPSYRVSQYDIIDVKEKSLSTLPFQVARETLGERPVPGWLQVLPGRLRILVHQEPERAQIDVPLQEQLIVEYYSK.

The region spanning 91 to 155 is the S4 RNA-binding domain; the sequence is TRLDNVVYRA…STLPFQVARE (65 aa).

The protein belongs to the universal ribosomal protein uS4 family. Part of the 30S ribosomal subunit. Contacts protein S5. The interaction surface between S4 and S5 is involved in control of translational fidelity.

One of the primary rRNA binding proteins, it binds directly to 16S rRNA where it nucleates assembly of the body of the 30S subunit. Its function is as follows. With S5 and S12 plays an important role in translational accuracy. This Nocardia farcinica (strain IFM 10152) protein is Small ribosomal subunit protein uS4.